We begin with the raw amino-acid sequence, 160 residues long: Sodium/proline symporter (160 aa).

2 consecutive transmembrane segments (helical) span residues 6–26 (PMLVTFIVYIFGMVLIGFIAW) and 68–88 (IFISGISESWIAIGLTLGAWI).

The protein belongs to the sodium:solute symporter (SSF) (TC 2.A.21) family.

The protein localises to the cell inner membrane. The enzyme catalyses L-proline(in) + Na(+)(in) = L-proline(out) + Na(+)(out). Catalyzes the sodium-dependent uptake of extracellular L-proline. This is Sodium/proline symporter from Klebsiella oxytoca.